Consider the following 270-residue polypeptide: Elongation factor Tu (270 aa).

The region spanning 1-103 (GILVVSAADG…AVDDYIPTPE (103 aa)) is the tr-type G domain. 35-38 (NKVD) is a binding site for GTP.

Belongs to the TRAFAC class translation factor GTPase superfamily. Classic translation factor GTPase family. EF-Tu/EF-1A subfamily. As to quaternary structure, monomer.

Its subcellular location is the cytoplasm. It carries out the reaction GTP + H2O = GDP + phosphate + H(+). Functionally, GTP hydrolase that promotes the GTP-dependent binding of aminoacyl-tRNA to the A-site of ribosomes during protein biosynthesis. The polypeptide is Elongation factor Tu (tuf) (Staphylococcus warneri).